We begin with the raw amino-acid sequence, 358 residues long: DnaJ homolog subfamily B member 11 (358 aa).

An N-terminal signal peptide occupies residues 1-22 (MAPQNLSTFCLLLLYLIGAVIA). The 66-residue stretch at 25–90 (DFYKILGVPR…EKRKQYDTYG (66 aa)) folds into the J domain. T188 is subject to Phosphothreonine. N261 carries N-linked (GlcNAc...) asparagine glycosylation.

As to quaternary structure, part of a large chaperone multiprotein complex comprising DNAJB11, HSP90B1, HSPA5, HYOU, PDIA2, PDIA4, PDIA6, PPIB, SDF2L1, UGGT1 and very small amounts of ERP29, but not, or at very low levels, CALR nor CANX. Binds to denatured substrates in an ATP-independent manner. Interacts via the J domain with HSPA5 in an ATP-dependent manner. In terms of processing, contains high-mannose Endo H-sensitive carbohydrates. Post-translationally, cys-169, Cys-171, Cys-193 and Cys-196 form intramolecular disulfide bonds. The preferential partner for each Cys is not known. Thr-188 was reported to be phosphorylated upon DNA damage by ATM or ATR; however as this position has been shown to be in the ER lumen, the in vivo relevance is not proven. As to expression, widely expressed.

The protein resides in the endoplasmic reticulum lumen. Functionally, as a co-chaperone for HSPA5 it is required for proper folding, trafficking or degradation of proteins. Binds directly to both unfolded proteins that are substrates for ERAD and nascent unfolded peptide chains, but dissociates from the HSPA5-unfolded protein complex before folding is completed. May help recruiting HSPA5 and other chaperones to the substrate. Stimulates HSPA5 ATPase activity. It is necessary for maturation and correct trafficking of PKD1. In Homo sapiens (Human), this protein is DnaJ homolog subfamily B member 11 (DNAJB11).